The following is a 406-amino-acid chain: Lysosome-associated membrane glycoprotein 1 (406 aa).

An N-terminal signal peptide occupies residues 1 to 24; that stretch reads MAAPGARRPLLLLLLAGLAHGASA. Residues 25–188 are first lumenal domain; the sequence is LFEVKNNGTT…SKEETHCTQD (164 aa). The Lumenal portion of the chain corresponds to 25-370; sequence LFEVKNNGTT…VEECVQDGNN (346 aa). Asn31, Asn52, Asn58, Asn70, Asn78, Asn97, Asn101, Asn115, Asn159, and Asn177 each carry an N-linked (GlcNAc...) asparagine glycan. A disulfide bridge links Cys35 with Cys74. A disulfide bond links Cys149 and Cys185. Residues 180 to 207 form a disordered region; sequence KEETHCTQDGPSPTTGPPSPSPPLVPTN. Residues 189-218 form a hinge region; that stretch reads GPSPTTGPPSPSPPLVPTNPTVSKYNVTGN. The segment covering 193-205 has biased composition (pro residues); that stretch reads TTGPPSPSPPLVP. 4 N-linked (GlcNAc...) asparagine glycosylation sites follow: Asn214, Asn219, Asn232, and Asn240. Positions 219-370 are second lumenal domain; sequence NGTCLLASMA…VEECVQDGNN (152 aa). Cys222 and Cys259 form a disulfide bridge. Asn252 is a glycosylation site (N-linked (GlcNAc...) (high mannose) asparagine). Residues Asn282, Asn296, and Asn311 are each glycosylated (N-linked (GlcNAc...) asparagine). A disulfide bond links Cys327 and Cys364. Residues 371–394 form a helical membrane-spanning segment; that stretch reads MLIPIAVGGALAGLVLIVLIAYLI. Over 395-406 the chain is Cytoplasmic; the sequence is GRKRSHAGYQTI.

The protein belongs to the LAMP family. Interacts with ABCB9; this interaction strongly stabilizes ABCB9 and protects ABCB9 against lysosomal degradation. Interacts with FURIN. Interacts with TMEM175; inhibiting the proton channel activity of TMEM175. Post-translationally, O- and N-glycosylated; some of the N-glycans attached to LAMP-1 are polylactosaminoglycans.

It localises to the lysosome membrane. Its subcellular location is the endosome membrane. It is found in the late endosome membrane. The protein localises to the cell membrane. The protein resides in the cytolytic granule membrane. Its function is as follows. Lysosomal membrane glycoprotein which plays an important role in lysosome biogenesis, lysosomal pH regulation, autophagy and cholesterol homeostasis. Acts as an important regulator of lysosomal lumen pH regulation by acting as a direct inhibitor of the proton channel TMEM175, facilitating lysosomal acidification for optimal hydrolase activity. Also plays an important role in NK-cells cytotoxicity. Mechanistically, participates in cytotoxic granule movement to the cell surface and perforin trafficking to the lytic granule. In addition, protects NK-cells from degranulation-associated damage induced by their own cytotoxic granule content. Presents carbohydrate ligands to selectins. Also implicated in tumor cell metastasis. In Mus musculus (Mouse), this protein is Lysosome-associated membrane glycoprotein 1 (Lamp1).